The following is a 246-amino-acid chain: Isoprenyl transferase (246 aa).

The active site involves Asp-18. A Mg(2+)-binding site is contributed by Asp-18. Substrate contacts are provided by residues 19–22 (GNGR), Trp-23, Arg-31, His-35, and 63–65 (SAE). The active-site Proton acceptor is Asn-66. Substrate contacts are provided by residues Trp-67, Arg-69, Arg-186, and 192–194 (RIS). Residue Glu-205 participates in Mg(2+) binding.

The protein belongs to the UPP synthase family. Homodimer. Requires Mg(2+) as cofactor.

Its function is as follows. Catalyzes the condensation of isopentenyl diphosphate (IPP) with allylic pyrophosphates generating different type of terpenoids. The chain is Isoprenyl transferase from Geobacter sulfurreducens (strain ATCC 51573 / DSM 12127 / PCA).